A 446-amino-acid chain; its full sequence is Gamma-glutamyl phosphate reductase (446 aa).

The protein belongs to the gamma-glutamyl phosphate reductase family.

The protein localises to the cytoplasm. The catalysed reaction is L-glutamate 5-semialdehyde + phosphate + NADP(+) = L-glutamyl 5-phosphate + NADPH + H(+). It functions in the pathway amino-acid biosynthesis; L-proline biosynthesis; L-glutamate 5-semialdehyde from L-glutamate: step 2/2. In terms of biological role, catalyzes the NADPH-dependent reduction of L-glutamate 5-phosphate into L-glutamate 5-semialdehyde and phosphate. The product spontaneously undergoes cyclization to form 1-pyrroline-5-carboxylate. This is Gamma-glutamyl phosphate reductase from Sulfurihydrogenibium sp. (strain YO3AOP1).